The chain runs to 689 residues: Protein asunder (689 aa).

Residues 521–550 (NGARLKLSKAKDQYRLLYRELEQLIQLNAT) are a coiled coil. 2 disordered regions span residues 591 to 619 (SPER…SKRR) and 669 to 689 (KDAV…SVRS). Low complexity predominate over residues 599-614 (SSVGASGSSNSNSLLK). Residues 613 to 619 (LKASKRR) carry the Nuclear localization signal (NLS) motif.

The protein belongs to the Integrator subunit 13 family. Belongs to the multiprotein complex Integrator, at least composed of IntS1, IntS2, IntS3, IntS4, omd/IntS5, IntS6, defl/IntS7, IntS8, IntS9, IntS10, IntS11, IntS12, asun/IntS13, IntS14 and IntS15. The core complex associates with protein phosphatase 2A subunits mts/PP2A and Pp2A-29B, to form the Integrator-PP2A (INTAC) complex. Post-translationally, phosphorylated.

It localises to the nucleus. The protein localises to the cytoplasm. Its subcellular location is the perinuclear region. In terms of biological role, component of the integrator complex, a multiprotein complex that terminates RNA polymerase II (Pol II) transcription in the promoter-proximal region of genes. The integrator complex provides a quality checkpoint during transcription elongation by driving premature transcription termination of transcripts that are unfavorably configured for transcriptional elongation: the complex terminates transcription by (1) catalyzing dephosphorylation of the C-terminal domain (CTD) of Pol II subunit Polr2A/Rbp1 and Spt5, and (2) degrading the exiting nascent RNA transcript via endonuclease activity. The integrator complex is also involved in the 3'-end processing of the U7 snRNA, and also the spliceosomal snRNAs U1, U2, U4 and U5. The polypeptide is Protein asunder (asun) (Drosophila simulans (Fruit fly)).